The primary structure comprises 54 residues: Ovomucoid (54 aa).

One can recognise a Kazal-like domain in the interval 4–54 (VDCSGYPTHACTLELKPLCGSDNQTYSNKCGFCNAVAQSNGTLTLSHFGKC). 3 disulfides stabilise this stretch: Cys6–Cys36, Cys14–Cys33, and Cys22–Cys54. N-linked (GlcNAc...) asparagine glycosylation occurs at Asn43.

Its subcellular location is the secreted. This Leipoa ocellata (Malleefowl) protein is Ovomucoid.